Here is a 469-residue protein sequence, read N- to C-terminus: Citrate synthase, mitochondrial (469 aa).

The N-terminal 31 residues, 1–31 (MTLLTASSRAAARLLGAKNSSCIIFAARHAS), are a transit peptide targeting the mitochondrion. Residues H304 and H350 contribute to the active site. Residue R359 coordinates oxaloacetate. D405 is a catalytic residue. 2 residues coordinate oxaloacetate: R431 and R451.

Belongs to the citrate synthase family. In terms of assembly, homodimer.

It is found in the mitochondrion matrix. The enzyme catalyses oxaloacetate + acetyl-CoA + H2O = citrate + CoA + H(+). It functions in the pathway carbohydrate metabolism; tricarboxylic acid cycle; isocitrate from oxaloacetate: step 1/2. Key enzyme of the Krebs tricarboxylic acid cycle which catalyzes the synthesis of citrate from acetyl coenzyme A and oxaloacetate. The chain is Citrate synthase, mitochondrial (CS) from Amblyrhynchus cristatus (Galapagos marine iguana).